A 354-amino-acid chain; its full sequence is Probable L-ascorbate-6-phosphate lactonase UlaG (354 aa).

Belongs to the UlaG family. A divalent metal cation serves as cofactor.

The protein resides in the cytoplasm. It carries out the reaction L-ascorbate 6-phosphate + H2O = 3-dehydro-L-gulonate 6-phosphate. Its pathway is cofactor degradation; L-ascorbate degradation; D-xylulose 5-phosphate from L-ascorbate: step 1/4. In terms of biological role, probably catalyzes the hydrolysis of L-ascorbate-6-P into 3-keto-L-gulonate-6-P. Is essential for L-ascorbate utilization under anaerobic conditions. This chain is Probable L-ascorbate-6-phosphate lactonase UlaG, found in Escherichia coli O45:K1 (strain S88 / ExPEC).